Consider the following 948-residue polypeptide: Probable disease resistance protein At5g47260 (948 aa).

Residues 20–57 adopt a coiled-coil conformation; sequence RKYLYNLERNLEALHKVMQDLNAMRNDLLKRLSKEEEI. In terms of domain architecture, NB-ARC spans 134–432; it reads HRALPPLVIK…CEGILAKEDR (299 aa). Position 176–183 (176–183) interacts with ATP; that stretch reads GRGGVGKT. LRR repeat units follow at residues 498–519, 520–542, 545–567, 569–591, 592–614, 615–636, 640–661, 666–686, and 690–711; these read MIRRMSVTSTQIQNISDSPQCS, ELTTLVFRRNRHLKWISGAFFQW, GLVVLDLSFNRELAELPEEVSSL, LLRFLNLSWTCIKGLPLGLKELK, SLIHLDLDYTSNLQEVDVIASLL, NLQVLRLFHSVSMDLKLMEDIQ, SLKELSLTVRGSSVLQRLLSIQ, SIRRLHLTETTIVDGGILSLN, and SLCELDILGCNILEITIDWRCT.

The protein belongs to the disease resistance NB-LRR family.

Potential disease resistance protein. The sequence is that of Probable disease resistance protein At5g47260 from Arabidopsis thaliana (Mouse-ear cress).